Reading from the N-terminus, the 424-residue chain is UPF0053 protein MG146 homolog (424 aa).

One can recognise a CNNM transmembrane domain in the interval 6-191 (SGGLLALIII…EQNGLFTKED (186 aa)). 4 helical membrane passes run 7-27 (GGLL…SAVV), 71-91 (LITI…ILFL), 101-121 (AISS…LCEI), and 135-155 (LVYF…ITKL). CBS domains are found at residues 210–270 (MIKW…NEPF) and 275–335 (LLYP…EHDE).

Belongs to the UPF0053 family.

Its subcellular location is the cell membrane. This is UPF0053 protein MG146 homolog from Mycoplasma pneumoniae (strain ATCC 29342 / M129 / Subtype 1) (Mycoplasmoides pneumoniae).